A 338-amino-acid polypeptide reads, in one-letter code: Terpene synthase 1 (338 aa).

The short motif at 80–85 (DDALDS) is the DDxx(x)D/E motif element. The NDxxSxxxD/E motif signature appears at 220 to 228 (NDLVSYEKE).

This sequence belongs to the terpene synthase family.

It catalyses the reaction (2E,6E)-farnesyl diphosphate = (2S,3R,6S,9S)-(-)-protoillud-7-ene + diphosphate. In terms of biological role, terpene synthase that converts its substrate farnesyl diphosphate (FPP) into the sesquiterpene protoillud-7-ene. The protein is Terpene synthase 1 of Cavenderia fasciculata (Slime mold).